The sequence spans 603 residues: Sulfoacetaldehyde acetyltransferase (603 aa).

Belongs to the TPP enzyme family. It depends on Mg(2+) as a cofactor. Thiamine diphosphate serves as cofactor.

It carries out the reaction acetyl phosphate + sulfite + H(+) = sulfoacetaldehyde + phosphate. Catalyzes the degradation of sulfoacetaldehyde into sulfite and acetyl phosphate. Involved in sulfolactate degradation. The chain is Sulfoacetaldehyde acetyltransferase from Roseovarius nubinhibens (strain ATCC BAA-591 / DSM 15170 / ISM).